The sequence spans 135 residues: UPF0299 membrane protein PC1_1498 (135 aa).

The next 4 helical transmembrane spans lie at 5–25 (FIVC…LLAG), 30–50 (ALLP…FTLL), 63–83 (GCHL…VGVM), and 93–113 (FGPI…VVGF).

The protein belongs to the UPF0299 family.

It is found in the cell inner membrane. The sequence is that of UPF0299 membrane protein PC1_1498 from Pectobacterium carotovorum subsp. carotovorum (strain PC1).